The chain runs to 75 residues: Antitoxin MT0312 (75 aa).

In terms of biological role, antitoxin component of a type II toxin-antitoxin (TA) system. The polypeptide is Antitoxin MT0312 (Mycobacterium tuberculosis (strain CDC 1551 / Oshkosh)).